The sequence spans 259 residues: Methionine aminopeptidase (259 aa).

Histidine 78 is a substrate binding site. Positions 95, 106, and 169 each coordinate a divalent metal cation. Histidine 176 is a binding site for substrate. Glutamate 202 contacts a divalent metal cation. Substrate is bound at residue tryptophan 220. Glutamate 234 is a binding site for a divalent metal cation.

This sequence belongs to the peptidase M24A family. Methionine aminopeptidase type 1 subfamily. As to quaternary structure, monomer. The cofactor is Co(2+). Zn(2+) serves as cofactor. Requires Mn(2+) as cofactor. It depends on Fe(2+) as a cofactor.

It carries out the reaction Release of N-terminal amino acids, preferentially methionine, from peptides and arylamides.. In terms of biological role, removes the N-terminal methionine from nascent proteins. The N-terminal methionine is often cleaved when the second residue in the primary sequence is small and uncharged (Met-Ala-, Cys, Gly, Pro, Ser, Thr, or Val). Requires deformylation of the N(alpha)-formylated initiator methionine before it can be hydrolyzed. The protein is Methionine aminopeptidase of Rickettsia prowazekii (strain Madrid E).